The chain runs to 278 residues: Energy-coupling factor transporter ATP-binding protein EcfA1 (278 aa).

In terms of domain architecture, ABC transporter spans 5-240 (IEVRNLKYKY…EDLEELGLDQ (236 aa)). 40-47 (GHNGSGKS) provides a ligand contact to ATP.

Belongs to the ABC transporter superfamily. Energy-coupling factor EcfA family. As to quaternary structure, forms a stable energy-coupling factor (ECF) transporter complex composed of 2 membrane-embedded substrate-binding proteins (S component), 2 ATP-binding proteins (A component) and 2 transmembrane proteins (T component).

It localises to the cell membrane. ATP-binding (A) component of a common energy-coupling factor (ECF) ABC-transporter complex. Unlike classic ABC transporters this ECF transporter provides the energy necessary to transport a number of different substrates. The chain is Energy-coupling factor transporter ATP-binding protein EcfA1 from Streptococcus sanguinis (strain SK36).